The sequence spans 124 residues: Fluoride-specific ion channel FluC 2 (124 aa).

A run of 4 helical transmembrane segments spans residues 9–29 (LGIF…STWL), 34–54 (DFPW…IYLV), 67–87 (LILA…SLML), and 99–119 (LSLI…AYYL). Na(+)-binding residues include glycine 77 and threonine 80.

The protein belongs to the fluoride channel Fluc/FEX (TC 1.A.43) family.

Its subcellular location is the cell membrane. It catalyses the reaction fluoride(in) = fluoride(out). Na(+) is not transported, but it plays an essential structural role and its presence is essential for fluoride channel function. In terms of biological role, fluoride-specific ion channel. Important for reducing fluoride concentration in the cell, thus reducing its toxicity. This Streptococcus pneumoniae serotype 4 (strain ATCC BAA-334 / TIGR4) protein is Fluoride-specific ion channel FluC 2.